The following is a 488-amino-acid chain: Ribulose bisphosphate carboxylase large chain (488 aa).

Substrate-binding residues include Asn127 and Thr177. The active-site Proton acceptor is the Lys179. Lys181 is a binding site for substrate. Mg(2+)-binding residues include Lys205, Asp207, and Glu208. An N6-carboxylysine modification is found at Lys205. His297 serves as the catalytic Proton acceptor. Positions 298, 330, and 382 each coordinate substrate.

Belongs to the RuBisCO large chain family. Type I subfamily. Heterohexadecamer of 8 large chains and 8 small chains. The cofactor is Mg(2+).

Its subcellular location is the plastid. It is found in the chloroplast. It carries out the reaction 2 (2R)-3-phosphoglycerate + 2 H(+) = D-ribulose 1,5-bisphosphate + CO2 + H2O. It catalyses the reaction D-ribulose 1,5-bisphosphate + O2 = 2-phosphoglycolate + (2R)-3-phosphoglycerate + 2 H(+). RuBisCO catalyzes two reactions: the carboxylation of D-ribulose 1,5-bisphosphate, the primary event in carbon dioxide fixation, as well as the oxidative fragmentation of the pentose substrate in the photorespiration process. Both reactions occur simultaneously and in competition at the same active site. This chain is Ribulose bisphosphate carboxylase large chain (rbcL), found in Pyropia haitanensis (Red seaweed).